The following is a 101-amino-acid chain: UPF0213 protein VC_A0739 (101 aa).

One can recognise a GIY-YIG domain in the interval 9-85 (SPWFVYLVRC…KALSKSQKEA (77 aa)).

It belongs to the UPF0213 family.

The sequence is that of UPF0213 protein VC_A0739 from Vibrio cholerae serotype O1 (strain ATCC 39315 / El Tor Inaba N16961).